We begin with the raw amino-acid sequence, 75 residues long: Sec-independent protein translocase protein TatA (75 aa).

Residues 1–21 traverse the membrane as a helical segment; the sequence is MGISIWQLLIVLGIVILLFGT. Residues 41–75 are disordered; that stretch reads SMSDEEEKNAEQQPLEKQNAEQQAQAEDKPKEKQG. Residues 56–65 show a composition bias toward low complexity; the sequence is EKQNAEQQAQ. Over residues 66–75 the composition is skewed to basic and acidic residues; the sequence is AEDKPKEKQG.

This sequence belongs to the TatA/E family. In terms of assembly, the Tat system comprises two distinct complexes: a TatABC complex, containing multiple copies of TatA, TatB and TatC subunits, and a separate TatA complex, containing only TatA subunits. Substrates initially bind to the TatABC complex, which probably triggers association of the separate TatA complex to form the active translocon.

The protein resides in the cell inner membrane. In terms of biological role, part of the twin-arginine translocation (Tat) system that transports large folded proteins containing a characteristic twin-arginine motif in their signal peptide across membranes. TatA could form the protein-conducting channel of the Tat system. This Marinobacter nauticus (strain ATCC 700491 / DSM 11845 / VT8) (Marinobacter aquaeolei) protein is Sec-independent protein translocase protein TatA.